The primary structure comprises 206 residues: Probable glutathione S-transferase 6 (206 aa).

In terms of domain architecture, GST N-terminal spans 2–79; it reads VHYKLVYFPL…YLAREFGIAG (78 aa). Glutathione-binding positions include tyrosine 8, tryptophan 39, lysine 43, 49–51, and 63–64; these read GQL and QS. Residues 81-206 enclose the GST C-terminal domain; that stretch reads NDTEAAEVDA…YIANRPDYPF (126 aa).

It belongs to the GST superfamily. Sigma family.

The enzyme catalyses RX + glutathione = an S-substituted glutathione + a halide anion + H(+). Functionally, conjugation of reduced glutathione to a wide number of exogenous and endogenous hydrophobic electrophiles. The protein is Probable glutathione S-transferase 6 (gst-6) of Caenorhabditis elegans.